A 244-amino-acid chain; its full sequence is MSGCRILLDAGNSSLKWAVVEDGTWLARGRSDYSDLSAVEAELDAGSECFIASVASRVYEEKLAALLTAAGCSAVWLKSEAAFDDVTNDYRDPTQLGVDRWMGLVAARARRRAPTLVVSAGTAMTVDALSGDGSFLGGLIVPGVALMQRSLQQGTAGGAAAGGAWQAFPRCTADAAYSGIIAALCGAVEGQHVRLAAHEGISPACLITGGGAETLLPHLGVDAEHVPTLVLEGIERVARAGGRG.

An ATP-binding site is contributed by 9–16 (DAGNSSLK). Residues Tyr90 and 97 to 100 (GVDR) each bind substrate. Catalysis depends on Asp99, which acts as the Proton acceptor. Thr122 is an ATP binding site. Position 172 (Thr172) interacts with substrate.

It belongs to the type III pantothenate kinase family. Homodimer. NH4(+) serves as cofactor. Requires K(+) as cofactor.

It localises to the cytoplasm. The catalysed reaction is (R)-pantothenate + ATP = (R)-4'-phosphopantothenate + ADP + H(+). Its pathway is cofactor biosynthesis; coenzyme A biosynthesis; CoA from (R)-pantothenate: step 1/5. In terms of biological role, catalyzes the phosphorylation of pantothenate (Pan), the first step in CoA biosynthesis. In Thiobacillus denitrificans (strain ATCC 25259 / T1), this protein is Type III pantothenate kinase.